A 1868-amino-acid polypeptide reads, in one-letter code: Inactive histone-lysine N-methyltransferase 2E (1868 aa).

Residues 63–66 (DHNY) carry the HCFC1-binding motif (HBM) motif. The PHD-type zinc finger occupies 118–166 (VTRCICGFTHDDGYMICCDKCSVWQHIDCMGIDRQHIPDTYLCERCQPR). 8 residues coordinate Zn(2+): Cys-121, Cys-123, Cys-135, Cys-138, His-143, Cys-146, Cys-160, and Cys-163. 3 disordered regions span residues 178–197 (RRKRENMSDGDTSATESGDE), 217–268 (ASRV…SSDS), and 308–329 (GSGNDSKDMNKSELSTNNSLFR). The SET domain occupies 330-447 (PPVESHIQKN…KGTEITIAFD (118 aa)). A glycan (O-linked (GlcNAc) serine) is linked at Ser-435. An O-linked (GlcNAc) threonine glycan is attached at Thr-440. Residues 472 to 504 (KRSSESTENINSGYETRRKKGKKEKDTSKEKDI) are disordered. Positions 494–504 (KEKDTSKEKDI) are enriched in basic and acidic residues. The stretch at 559 to 613 (VEMESEEQIAERKRKMTREERKMEAILQAFARLEKREKRREQALERISTAKTEVK) forms a coiled coil. Positions 646–670 (NRTKQRKSFSRSRTHIGQQRRRHRT) are enriched in basic residues. Residues 646 to 682 (NRTKQRKSFSRSRTHIGQQRRRHRTVSMCSDIPPSSP) form a disordered region. A phosphoserine mark is found at Ser-837 and Ser-845. Residues 884 to 908 (YSESSTPTPSPYATPTHTDITPTDP) show a composition bias toward low complexity. Disordered regions lie at residues 884-924 (YSES…ETYR) and 1038-1068 (SMETPAHDRTEPSNQLDSTHSGRGTMYSSWV). Polar residues predominate over residues 1049–1068 (PSNQLDSTHSGRGTMYSSWV). Ser-1070 bears the Phosphoserine mark. Disordered stretches follow at residues 1165–1222 (KRQR…PPPA), 1236–1315 (SSEE…SNHI), 1334–1565 (PDAE…QNQQ), and 1585–1842 (VFTS…QASP). The span at 1184-1197 (SVSPHPSGSLSSSG) shows a compositional bias: low complexity. Over residues 1203–1213 (SSENGEQAENQ) the composition is skewed to polar residues. Ser-1282 carries the phosphoserine modification. Basic and acidic residues predominate over residues 1282-1291 (SDHRKDKDSG). Composition is skewed to low complexity over residues 1294–1312 (SPCVSCSPSHVQSPPSSHS) and 1348–1363 (PSPDTSQSPSKTSKPG). At Ser-1364 the chain carries Phosphoserine. Composition is skewed to polar residues over residues 1389–1421 (ATVSEADNSVHQNPEPQHRQLSSNTPALSQNHA), 1451–1463 (HTENPPKSSTPHT), and 1488–1498 (SQSPQVGTPQR). A compositionally biased stretch (low complexity) spans 1506 to 1518 (AAAQNLQANPQQA). A compositionally biased stretch (polar residues) spans 1519-1547 (TSGALFTQTPSGQSSATYSQFNQQSLNST). The span at 1548 to 1558 (APPPPPPPPPS) shows a compositional bias: pro residues. A compositionally biased stretch (polar residues) spans 1585–1603 (VFTSGPNQALPGSTSQQSV). The span at 1631–1642 (VPPPPPPPPAPG) shows a compositional bias: pro residues. The segment covering 1647 to 1656 (QQPSSHQQHS) has biased composition (polar residues). Over residues 1682 to 1692 (LPPPPPPPGPA) the composition is skewed to pro residues. The segment covering 1706-1716 (QSLQAQHQHVV) has biased composition (polar residues). The segment covering 1719 to 1732 (APPPPPPPPPPPPA) has biased composition (pro residues). A compositionally biased stretch (polar residues) spans 1806 to 1816 (QGPNSIPTPTA).

This sequence belongs to the class V-like SAM-binding methyltransferase superfamily. Histone-lysine methyltransferase family. TRX/MLL subfamily. In terms of assembly, component of a complex composed of KMT2E, OGT and USP7; the complex stabilizes KMT2E, preventing KMT2E ubiquitination and proteasomal-mediated degradation. Interacts (via N-terminus) with OGT (via TRP repeats). Interacts with deubiquitinating enzyme USP7 (via MATH domain). Interacts (via HBM motif) with HCFC1 (via Kelch domain). Interacts with E2F1; the interaction is probably indirect and is mediated via HCFC1. Ubiquitinated. Deubiquitinated by USP7. In terms of processing, O-glycosylated at Ser-435 and Thr-440 in the SET domain by OGT which probably prevents KMT2E proteasomal-mediated degradation.

It is found in the chromosome. Its subcellular location is the cytoplasm. The protein resides in the cytoskeleton. The protein localises to the microtubule organizing center. It localises to the centrosome. It is found in the nucleus speckle. In terms of biological role, associates with chromatin regions downstream of transcriptional start sites of active genes and thus regulates gene transcription. Chromatin interaction is mediated via the binding to tri-methylated histone H3 at 'Lys-4' (H3K4me3). Key regulator of hematopoiesis involved in terminal myeloid differentiation and in the regulation of hematopoietic stem cell (HSCs) self-renewal by a mechanism that involves DNA methylation. Also acts as an important cell cycle regulator, participating in cell cycle regulatory network machinery at multiple cell cycle stages including G1/S transition, S phase progression and mitotic entry. Recruited to E2F1 responsive promoters by HCFC1 where it stimulates tri-methylation of histone H3 at 'Lys-4' and transcriptional activation and thereby facilitates G1 to S phase transition. During myoblast differentiation, required to suppress inappropriate expression of S-phase-promoting genes and maintain expression of determination genes in quiescent cells. The sequence is that of Inactive histone-lysine N-methyltransferase 2E (Kmt2e) from Mus musculus (Mouse).